The chain runs to 282 residues: 4-hydroxy-tetrahydrodipicolinate reductase (282 aa).

Residue 12 to 17 (GVTGRM) participates in NAD(+) binding. Position 44 (arginine 44) interacts with NADP(+). NAD(+) is bound by residues 107–109 (GTT) and 131–134 (SSNF). Histidine 164 (proton donor/acceptor) is an active-site residue. A (S)-2,3,4,5-tetrahydrodipicolinate-binding site is contributed by histidine 165. The Proton donor role is filled by lysine 168. 174–175 (GT) lines the (S)-2,3,4,5-tetrahydrodipicolinate pocket.

It belongs to the DapB family. In terms of assembly, homotetramer.

It is found in the cytoplasm. It carries out the reaction (S)-2,3,4,5-tetrahydrodipicolinate + NAD(+) + H2O = (2S,4S)-4-hydroxy-2,3,4,5-tetrahydrodipicolinate + NADH + H(+). The enzyme catalyses (S)-2,3,4,5-tetrahydrodipicolinate + NADP(+) + H2O = (2S,4S)-4-hydroxy-2,3,4,5-tetrahydrodipicolinate + NADPH + H(+). It participates in amino-acid biosynthesis; L-lysine biosynthesis via DAP pathway; (S)-tetrahydrodipicolinate from L-aspartate: step 4/4. Its function is as follows. Catalyzes the conversion of 4-hydroxy-tetrahydrodipicolinate (HTPA) to tetrahydrodipicolinate. The polypeptide is 4-hydroxy-tetrahydrodipicolinate reductase (Blochmanniella pennsylvanica (strain BPEN)).